The chain runs to 463 residues: Carnosine N-methyltransferase (463 aa).

Disordered stretches follow at residues 1–64 and 79–104; these read MTKN…SQLK and KHNH…EKEE. Positions 9–58 are enriched in low complexity; that stretch reads KSNNSNISNNNNNNNNNNNNNNNNNNNNNNNNNNNNNNNNNNNNNNNNKN. Residues 79–93 are compositionally biased toward basic and acidic residues; that stretch reads KHNHDHSHDHNHDYD. Acidic residues predominate over residues 94–103; the sequence is DNNEDDEEKE. S-adenosyl-L-methionine is bound by residues Q215, R218, G260, E281, D351, F352, and C367. D371 is a carnosine binding site. Position 379 (Y379) interacts with S-adenosyl-L-methionine. Residues H402 and Y450 each contribute to the carnosine site.

The protein belongs to the carnosine N-methyltransferase family.

The enzyme catalyses carnosine + S-adenosyl-L-methionine = anserine + S-adenosyl-L-homocysteine + H(+). In terms of biological role, N-methyltransferase that mediates the formation of anserine (beta-alanyl-N(Pi)-methyl-L-histidine) from carnosine. The chain is Carnosine N-methyltransferase from Dictyostelium discoideum (Social amoeba).